Reading from the N-terminus, the 1576-residue chain is Proton channel OtopLc (1576 aa).

Disordered regions lie at residues 1-602 (MDSS…SSPP) and 621-736 (QIGS…SSPV). 2 stretches are compositionally biased toward low complexity: residues 58–67 (SLAEEVLLLV) and 76–85 (LLGQPLPTLT). Acidic residues-rich tracts occupy residues 103-116 (DEGD…EPVP), 159-171 (DDGE…DAEE), 186-198 (SNPD…EEQE), and 206-216 (PKEEDEEEDDD). Positions 219–228 (TPPPPLPPLP) are enriched in pro residues. The segment covering 229-241 (SNFSYVQGHNLGQ) has biased composition (polar residues). N230 carries an N-linked (GlcNAc...) asparagine glycan. Low complexity predominate over residues 243–252 (TPPLTKSPSN). Residues 253 to 264 (SPSPPVTPPPCP) show a composition bias toward pro residues. N267 carries an N-linked (GlcNAc...) asparagine glycan. A compositionally biased stretch (acidic residues) spans 316-341 (DQPEPEDQPPEPENEPEPEPEPEPEP). The span at 347 to 356 (AREDYSRSLD) shows a compositional bias: basic and acidic residues. Polar residues predominate over residues 362-376 (TTITTPPSNGYSASS). Positions 384-393 (HFAELDEDRG) are enriched in basic and acidic residues. Residues 402–419 (QEPEEEVEEEEEEEEEEL) show a composition bias toward acidic residues. A compositionally biased stretch (basic and acidic residues) spans 420–433 (TKETDEISVDRESL). Residues 434–457 (QDQGGDSISSPRPASILTGSISTS) show a composition bias toward polar residues. The segment covering 465–507 (SPKPESRGPSRSGSQRSQLRSGSQQGSIAESRGGSRIGSRTGS) has biased composition (low complexity). Composition is skewed to polar residues over residues 519 to 534 (PQAS…SQGQ) and 545 to 555 (KSGSQRMQSPQ). The segment covering 563–575 (MPSPPLMRSPPPE) has biased composition (pro residues). A compositionally biased stretch (low complexity) spans 661–685 (AAAAPAVTTTAATTAVTSQPRSHFT). A compositionally biased stretch (basic residues) spans 686–709 (SSHHHYHLPHQFQHPHHQNHHTHS). The chain crosses the membrane as a helical span at residues 741 to 761 (LFMAGVAPPIAAGAGSLMAMP). The disordered stretch occupies residues 771-845 (GRVSARSGSQ…GSSSQPALSG (75 aa)). The span at 776–799 (RSGSQHHVTIDESSLPSHKGNIQE) shows a compositional bias: polar residues. Over residues 826-839 (DSSDPPSSPGGSSS) the composition is skewed to low complexity. Helical transmembrane passes span 891 to 911 (ALAT…GIAF) and 931 to 951 (LYLY…LIWG). The span at 962–973 (PSKSATKASGTD) shows a compositional bias: polar residues. The tract at residues 962–1001 (PSKSATKASGTDSMDESDTDSNSVHHRLPPPIPVRRPSLL) is disordered. 3 helical membrane-spanning segments follow: residues 1019-1039 (GAVA…GQYF), 1051-1071 (LLAL…YFIF), and 1084-1104 (IIAR…WLNV). A glycan (N-linked (GlcNAc...) asparagine) is linked at N1121. The next 7 helical transmembrane spans lie at 1179–1199 (FLFP…YVMW), 1239–1259 (FVGI…FVLI), 1272–1292 (VTIC…VGMI), 1310–1330 (ILLV…VIAG), 1340–1360 (LVPI…MFIL), 1381–1401 (IVTF…LEKS), and 1412–1432 (FYGL…AIFY). N1479 is a glycosylation site (N-linked (GlcNAc...) asparagine). The segment at 1498-1549 (EEVDSGESNSAEDAGAGAGSGGSRGSGGGAGAAEAGEAGEEGQQGGDSSCGL) is disordered. Residues 1503–1512 (GESNSAEDAG) show a composition bias toward low complexity. Gly residues predominate over residues 1513–1528 (AGAGSGGSRGSGGGAG).

It belongs to the otopetrin family.

The protein localises to the cell membrane. In terms of biological role, proton-selective channel that specifically transports protons into cells. Proton-selective channel activity is probably required in cell types that use changes in intracellular pH for cell signaling or to regulate biochemical or developmental processes. The polypeptide is Proton channel OtopLc (Drosophila melanogaster (Fruit fly)).